We begin with the raw amino-acid sequence, 292 residues long: Acidic endochitinase (292 aa).

Positions 1–25 (MAAHKITTTLSIFFLLSSIFRSSDA) are cleaved as a signal peptide. Residues 26–292 (AGIAIYWGQN…YSDSIKGSIG (267 aa)) enclose the GH18 domain. Cystine bridges form between Cys45–Cys92 and Cys75–Cys82. Glu152 acts as the Proton donor in catalysis. Cys180 and Cys209 are joined by a disulfide.

The protein belongs to the glycosyl hydrolase 18 family. Chitinase class II subfamily.

It is found in the secreted. The protein localises to the extracellular space. It catalyses the reaction Random endo-hydrolysis of N-acetyl-beta-D-glucosaminide (1-&gt;4)-beta-linkages in chitin and chitodextrins.. Functionally, this protein functions as a defense against chitin containing fungal pathogens. The protein is Acidic endochitinase of Cucumis sativus (Cucumber).